Here is a 370-residue protein sequence, read N- to C-terminus: Chaperone protein DnaJ (370 aa).

Positions 4–68 (DYYQVLGVSK…QKRAAYDRFG (65 aa)) constitute a J domain. Residues 133–211 (GIEKNISFSS…CHGMGRYHKQ (79 aa)) form a CR-type zinc finger. Zn(2+) is bound by residues C146, C149, C163, C166, C185, C188, C199, and C202. CXXCXGXG motif repeat units follow at residues 146–153 (CDTCHGTG), 163–170 (CDACGGVG), 185–192 (CHKCQGNG), and 199–206 (CKKCHGMG).

The protein belongs to the DnaJ family. As to quaternary structure, homodimer. The cofactor is Zn(2+).

It is found in the cytoplasm. In terms of biological role, participates actively in the response to hyperosmotic and heat shock by preventing the aggregation of stress-denatured proteins and by disaggregating proteins, also in an autonomous, DnaK-independent fashion. Unfolded proteins bind initially to DnaJ; upon interaction with the DnaJ-bound protein, DnaK hydrolyzes its bound ATP, resulting in the formation of a stable complex. GrpE releases ADP from DnaK; ATP binding to DnaK triggers the release of the substrate protein, thus completing the reaction cycle. Several rounds of ATP-dependent interactions between DnaJ, DnaK and GrpE are required for fully efficient folding. Also involved, together with DnaK and GrpE, in the DNA replication of plasmids through activation of initiation proteins. In Rickettsia prowazekii (strain Madrid E), this protein is Chaperone protein DnaJ.